The following is a 404-amino-acid chain: UPF0674 endoplasmic reticulum membrane protein YNR021W (404 aa).

An N-acetylserine modification is found at S2. An N-linked (GlcNAc...) asparagine glycan is attached at N44. The chain crosses the membrane as a helical span at residues L49–V68. The N-linked (GlcNAc...) asparagine glycan is linked to N98. The tract at residues A369–Q404 is disordered. Residues E381–E392 are compositionally biased toward basic and acidic residues. Basic residues predominate over residues R393–Q404.

It belongs to the UPF0674 family.

Its subcellular location is the endoplasmic reticulum membrane. In Saccharomyces cerevisiae (strain ATCC 204508 / S288c) (Baker's yeast), this protein is UPF0674 endoplasmic reticulum membrane protein YNR021W.